The following is a 188-amino-acid chain: RWD domain-containing protein 4 (188 aa).

An RWD domain is found at M9 to F111. The interval T132–P167 is disordered. The segment covering K155 to L166 has biased composition (basic and acidic residues).

The sequence is that of RWD domain-containing protein 4 (Rwdd4) from Mus musculus (Mouse).